Here is a 137-residue protein sequence, read N- to C-terminus: Small ribosomal subunit protein uS12 (137 aa).

At D89 the chain carries 3-methylthioaspartic acid. Residues 101-137 (SLDTSGVADRKQSRSKYGAKQPKAGAPAAPVKGKGKK) form a disordered region. The segment covering 116–137 (KYGAKQPKAGAPAAPVKGKGKK) has biased composition (low complexity).

Belongs to the universal ribosomal protein uS12 family. Part of the 30S ribosomal subunit. Contacts proteins S8 and S17. May interact with IF1 in the 30S initiation complex.

With S4 and S5 plays an important role in translational accuracy. Its function is as follows. Interacts with and stabilizes bases of the 16S rRNA that are involved in tRNA selection in the A site and with the mRNA backbone. Located at the interface of the 30S and 50S subunits, it traverses the body of the 30S subunit contacting proteins on the other side and probably holding the rRNA structure together. The combined cluster of proteins S8, S12 and S17 appears to hold together the shoulder and platform of the 30S subunit. The protein is Small ribosomal subunit protein uS12 of Chlorobium chlorochromatii (strain CaD3).